The chain runs to 317 residues: Lactamase-like protein adaB (317 aa).

Zn(2+) is bound by residues histidine 97, histidine 99, aspartate 101, and histidine 102. Aspartate 101 (proton donor/acceptor) is an active-site residue.

It belongs to the metallo-beta-lactamase superfamily. The cofactor is Zn(2+).

The catalysed reaction is 3-(2,4-dioxopentyl)-2,3,6,8,9-pentahydroxy-1-oxo-1,2,3,4-tetrahydroanthracene-2-carboxyl-[ACP] = 2-acetyl-3,4a,8,10,11,12a-hexahydroxy-1,4,4a,5,12,12a-hexahydrotetracene-1,12-dione + holo-[ACP] + H(+). Its pathway is secondary metabolite biosynthesis. In terms of biological role, lactamase-like protein; part of the gene cluster that mediates the biosynthesis of the linear tetracyclic TAN-1612 neuropeptide Y receptor antagonist. The decaketide backbone of TAN-1612 is synthesized by the non-reducing polyketide synthase adaA via condensation of one acetyl-CoA starter unit with 9 malonyl-CoA units. The FAD-dependent monooxygenase adaC then performs hydroxylation at C2 while the polaketide chain is still attached to the NRPKS adaA. The alpha-hydroxylation step at C2 appears to be crucial for the following C18-C1 Claisen cyclization and release of the C9-hydroxyl version of TAN-1612 from the NRPKS adaA, two steps performed by the lactamase-like protein adaB. Finally, the O-methyltransferase adaD performs the C9 O-methylation to complete the biosynthesis of TAN-1612. This is Lactamase-like protein adaB from Aspergillus niger (strain ATCC MYA-4892 / CBS 513.88 / FGSC A1513).